The following is a 428-amino-acid chain: NADH-ubiquinone oxidoreductase chain 2 (428 aa).

The next 14 membrane-spanning stretches (helical) occupy residues 22–42, 59–79, 84–104, 108–128, 140–160, 185–205, 218–238, 241–261, 269–289, 292–312, 332–352, 356–376, 384–404, and 408–428; these read IAFL…LHFG, LDES…VIMN, LGWE…YMLT, LLLM…ILSL, LLSS…FYGL, ILLL…LWVP, WMGS…YPLL, LAPF…VLMA, FLAY…AIGD, AYGY…VLLS, LGLG…FAGF, LLVL…LLIL, YYLK…SAPI, and YPNL…LLLL.

It belongs to the complex I subunit 2 family.

It is found in the mitochondrion inner membrane. It carries out the reaction a ubiquinone + NADH + 5 H(+)(in) = a ubiquinol + NAD(+) + 4 H(+)(out). Functionally, core subunit of the mitochondrial membrane respiratory chain NADH dehydrogenase (Complex I) that is believed to belong to the minimal assembly required for catalysis. Complex I functions in the transfer of electrons from NADH to the respiratory chain. The immediate electron acceptor for the enzyme is believed to be ubiquinone. This chain is NADH-ubiquinone oxidoreductase chain 2, found in Hyaloraphidium curvatum (Lower fungus).